The sequence spans 650 residues: 1-deoxy-D-xylulose-5-phosphate synthase 2 (650 aa).

Thiamine diphosphate-binding positions include His79 and 120–122 (AHS). Residue Asp151 participates in Mg(2+) binding. Residues 152-153 (GS), Asn180, Tyr289, and Glu371 contribute to the thiamine diphosphate site. Residue Asn180 coordinates Mg(2+).

The protein belongs to the transketolase family. DXPS subfamily. As to quaternary structure, homodimer. The cofactor is Mg(2+). Thiamine diphosphate is required as a cofactor.

The catalysed reaction is D-glyceraldehyde 3-phosphate + pyruvate + H(+) = 1-deoxy-D-xylulose 5-phosphate + CO2. It functions in the pathway metabolic intermediate biosynthesis; 1-deoxy-D-xylulose 5-phosphate biosynthesis; 1-deoxy-D-xylulose 5-phosphate from D-glyceraldehyde 3-phosphate and pyruvate: step 1/1. In terms of biological role, catalyzes the acyloin condensation reaction between C atoms 2 and 3 of pyruvate and glyceraldehyde 3-phosphate to yield 1-deoxy-D-xylulose-5-phosphate (DXP). This Zymomonas mobilis subsp. mobilis (strain ATCC 31821 / ZM4 / CP4) protein is 1-deoxy-D-xylulose-5-phosphate synthase 2.